The primary structure comprises 134 residues: Large ribosomal subunit protein uL16c (134 aa).

The segment at 1–22 is disordered; it reads MLSPKRTRFRKQHRGRMKGISH.

Belongs to the universal ribosomal protein uL16 family. As to quaternary structure, part of the 50S ribosomal subunit.

The protein resides in the plastid. It is found in the chloroplast. The protein is Large ribosomal subunit protein uL16c of Nicotiana tabacum (Common tobacco).